The following is a 155-amino-acid chain: Ribosome maturation factor RimP (155 aa).

The protein belongs to the RimP family.

The protein localises to the cytoplasm. In terms of biological role, required for maturation of 30S ribosomal subunits. The chain is Ribosome maturation factor RimP from Maridesulfovibrio salexigens (strain ATCC 14822 / DSM 2638 / NCIMB 8403 / VKM B-1763) (Desulfovibrio salexigens).